A 340-amino-acid polypeptide reads, in one-letter code: MKESINILAIESSCDETSAAVVVNGREVLSNIIASQISTHEKFGGVVPEVASRKHIEVISAVVQEALDEANFTLDDIDAIGVTYGPGLVGALLVGLQYAKGLAFATGKPLIGVNHIEGHISANFIEYKDLKPPFMCLVVSGGHTFIVYMKDYGEFEVLGETRDDAAGEAFDKVARAIGLGYPGGPKIDKISKEGNEEAIKFPRANFHNDTLDFSFSGIKSAVLNYLNKKEMKGEEINKADVAASFQKSVVDVLVDNTIKACMSKKVDKIAVAGGVASNSCLRETLVRECKKKGIEVLIPPFILCTDNAAMIGSAAYFEYIKGRRTSLDINAVPNLKLGER.

His115 and His119 together coordinate Fe cation. Residues 138 to 142 (VVSGG), Asp171, Gly184, Asp188, and Asn278 each bind substrate. Residue Asp306 coordinates Fe cation.

This sequence belongs to the KAE1 / TsaD family. The cofactor is Fe(2+).

It is found in the cytoplasm. It carries out the reaction L-threonylcarbamoyladenylate + adenosine(37) in tRNA = N(6)-L-threonylcarbamoyladenosine(37) in tRNA + AMP + H(+). Its function is as follows. Required for the formation of a threonylcarbamoyl group on adenosine at position 37 (t(6)A37) in tRNAs that read codons beginning with adenine. Is involved in the transfer of the threonylcarbamoyl moiety of threonylcarbamoyl-AMP (TC-AMP) to the N6 group of A37, together with TsaE and TsaB. TsaD likely plays a direct catalytic role in this reaction. This chain is tRNA N6-adenosine threonylcarbamoyltransferase, found in Clostridium botulinum (strain Hall / ATCC 3502 / NCTC 13319 / Type A).